A 325-amino-acid chain; its full sequence is Methionyl-tRNA formyltransferase (325 aa).

112–115 (SLLP) lines the (6S)-5,6,7,8-tetrahydrofolate pocket.

This sequence belongs to the Fmt family.

It carries out the reaction L-methionyl-tRNA(fMet) + (6R)-10-formyltetrahydrofolate = N-formyl-L-methionyl-tRNA(fMet) + (6S)-5,6,7,8-tetrahydrofolate + H(+). Its function is as follows. Attaches a formyl group to the free amino group of methionyl-tRNA(fMet). The formyl group appears to play a dual role in the initiator identity of N-formylmethionyl-tRNA by promoting its recognition by IF2 and preventing the misappropriation of this tRNA by the elongation apparatus. The polypeptide is Methionyl-tRNA formyltransferase (Roseiflexus sp. (strain RS-1)).